The chain runs to 639 residues: Carbon monoxide dehydrogenase (639 aa).

[4Fe-4S] cluster is bound by residues C41, C49, C50, C53, C58, and C72. H265, C300, C338, C451, C481, and C531 together coordinate [Ni-4Fe-4S] cluster.

It belongs to the Ni-containing carbon monoxide dehydrogenase family. As to quaternary structure, homodimer. [4Fe-4S] cluster serves as cofactor. Requires [Ni-4Fe-4S] cluster as cofactor.

It is found in the cytoplasm. The protein localises to the cell inner membrane. It carries out the reaction CO + 2 oxidized [2Fe-2S]-[ferredoxin] + H2O = 2 reduced [2Fe-2S]-[ferredoxin] + CO2 + 2 H(+). Functionally, allows growth in a CO-dependent manner in the dark. CODH oxidizes carbon monoxide coupled, via CooF, to the reduction of a hydrogen cation by a hydrogenase (possibly CooH). This Rhodospirillum rubrum protein is Carbon monoxide dehydrogenase (cooS).